The chain runs to 320 residues: SUMO-activating enzyme subunit 1B-1 (320 aa).

Residue M1 is modified to N-acetylmethionine.

This sequence belongs to the ubiquitin-activating E1 family. In terms of assembly, heterodimer of SAE1A or SAE1B and SAE2. The complex binds SUMO proteins via SAE2.

The protein resides in the nucleus. It participates in protein modification; protein sumoylation. Its function is as follows. The dimeric enzyme acts as an E1 ligase for SUMO1 and SUMO2. It mediates ATP-dependent activation of SUMO proteins and formation of a thioester with a conserved cysteine residue on SAE2. Functionally redundant with its paralog SAE1A. In Arabidopsis thaliana (Mouse-ear cress), this protein is SUMO-activating enzyme subunit 1B-1 (SAE1B-1).